The chain runs to 119 residues: Odin profilin (119 aa).

Belongs to the Asgard profilin family.

It localises to the cytoplasm. Its subcellular location is the cytoskeleton. Inhibition of rabbit actin polymerization is reduced by phosphatidylinositol-(4,5)-P2(1,2-dipalmitoyl), a soluble form of the phospholipid phosphatidylinositol, suggesting an unknown lipid might regulate actin-profilin interaction in vivo. Functionally, binds to actin and affects the structure of the cytoskeleton. At high concentrations inhibits spontaneous rabbit actin nucleation. This strongly suggests this archaea has a profilin-regulated actin system, and actin-type genes can be identified in this organism. This Odinarchaeota yellowstonii (strain LCB_4) protein is Odin profilin.